The primary structure comprises 187 residues: Capsid protein VP10 (187 aa).

C45 and C51 form a disulfide bridge.

It is found in the virion. Its function is as follows. VP10 self-assembles, together with capsid protein VP4, to form an icosahedral caspid of 87 nm in diameter, with a T=43 symmetry and composed of 420 hexamers and 12 pentamers. VP4 proteins arrange into hexons, while VP10 proteins form the pentameric densities located at the 5-fold axes in the virion. The stoichiometry of VP4:VP10 is 42:1. This is Capsid protein VP10 from Sulfolobus polyhedral virus 1 (SPV1).